We begin with the raw amino-acid sequence, 361 residues long: Epi-isozizaene synthase (361 aa).

Mg(2+) is bound by residues Asp-99, Asp-103, Asn-240, Ser-244, and Glu-248. Residues 99 to 103 (DDRHD) carry the DDXXD motif motif.

It belongs to the terpene synthase family. It depends on Mg(2+) as a cofactor. Mn(2+) serves as cofactor. Fe(3+) is required as a cofactor.

The catalysed reaction is (2E,6E)-farnesyl diphosphate = (+)-epi-isozizaene + diphosphate. The protein operates within sesquiterpene biosynthesis; epi-isozizaene biosynthesis. Its function is as follows. Catalyzes the cyclization of farnesyl diphosphate (FPP) to the sesquiterpene epi-isozizaene. The sequence is that of Epi-isozizaene synthase (cyc1) from Streptomyces coelicolor (strain ATCC BAA-471 / A3(2) / M145).